A 333-amino-acid polypeptide reads, in one-letter code: Transaldolase (333 aa).

Lys135 functions as the Schiff-base intermediate with substrate in the catalytic mechanism.

The protein belongs to the transaldolase family. Type 1 subfamily. Homodimer.

Its subcellular location is the cytoplasm. It catalyses the reaction D-sedoheptulose 7-phosphate + D-glyceraldehyde 3-phosphate = D-erythrose 4-phosphate + beta-D-fructose 6-phosphate. It functions in the pathway carbohydrate degradation; pentose phosphate pathway; D-glyceraldehyde 3-phosphate and beta-D-fructose 6-phosphate from D-ribose 5-phosphate and D-xylulose 5-phosphate (non-oxidative stage): step 2/3. Functionally, transaldolase is important for the balance of metabolites in the pentose-phosphate pathway. The protein is Transaldolase of Prochlorococcus marinus subsp. pastoris (strain CCMP1986 / NIES-2087 / MED4).